The sequence spans 678 residues: Probable E3 ubiquitin ligase complex SCF subunit sconB (678 aa).

The segment at 1–52 (MSTEDNHDSQILTARHRSDASEQSFKSLFGGPSSEDGKETEPDTHDHNHSFS) is disordered. The span at 35–49 (EDGKETEPDTHDHNH) shows a compositional bias: basic and acidic residues. Residues 178–224 (IDFITALPPEIAFKILCYLDTTSLCKASQVSRGWRALADDDVVWHRM) form the F-box domain. Positions 266-287 (VVGPRSPDASAESPPSGKRKLE) are disordered. 8 WD repeats span residues 347–375 (GHTN…KIWD), 387–415 (GHES…KVWN), 427–455 (GHRG…KIWN), 466–496 (GHTD…RLWD), 508–543 (GHVG…TSGD), 553–595 (MGLE…RLWE), 607–635 (GHLE…KIWD), and 647–675 (GHSG…RMYS).

This sequence belongs to the WD repeat MET30/SCONB/SCON-2 family. In terms of assembly, component of the SCF(sconB) E3 ubiquitin ligase complex.

It functions in the pathway protein modification; protein ubiquitination. Its function is as follows. Component of the SCF(sconB) E3 ubiquitin ligase complex involved in the regulation of sulfur metabolite repression, probably by mediating the inactivation or degradation of the metR transcription factor. The sequence is that of Probable E3 ubiquitin ligase complex SCF subunit sconB (sconB) from Emericella nidulans (strain FGSC A4 / ATCC 38163 / CBS 112.46 / NRRL 194 / M139) (Aspergillus nidulans).